The sequence spans 442 residues: Protein bag of marbles (442 aa).

The segment at 201-250 is required for interaction with ubiquitin; that stretch reads FDMPVKSTMPKSLNVRYQLQVLCTKVERFLVQQRRTLEANRHFDFEKYDE. Residues 408 to 442 form a disordered region; that stretch reads VSMEQPSASEEEFEETEEVPSSPPRHTGRVPRFRS. A compositionally biased stretch (acidic residues) spans 416 to 425; that stretch reads SEEEFEETEE. Residues 433–442 are compositionally biased toward basic residues; sequence HTGRVPRFRS.

In terms of assembly, interacts (via central region) with ubiquitin. Interacts (via C-terminus) with otu (via OTU domain); the interaction enhances otu aggregation into amyloid-like structures and enhances its deubiquitinase activity. Together with otu interacts with CycA/cyclin-A (via C-terminus); the interaction stabilizes CycA by promoting and enhancing otu dependent deubiquitination of CycA. Together with otu interacts with Traf6. Part of a complex composed of at least tut, bam and bgcn; complex formation does not require RNA. Interacts (via C-terminus) with bgcn; the interaction is direct and is not disrupted by eIF4A. Interacts with eIF4A (via multiple contacts); the interaction is direct and is not disrupted by bgcn. Interacts (via N-terminus) with tut; the interaction is direct and mediates the interaction between tut and bgcn. As part of the bam-bgcn-tut complex associates with twin; may recruit the CCR4-NOT1 deadenylation complex to mRNA 3'-UTRs to mediate post-transcriptional regulation of expression. Part of a complex composed of at least mei-P26, bam, bgcn and Sxl; this complex is involved in translational repression of nanos mRNA. Post-translationally, ubiquitinated (C-terminal region). As to expression, in cystoblasts and/or very early cystocytes in testis (at protein level); expression levels are regulated by mei-P26. In cystoblasts and/or very early cystocytes in ovary. Expressed in the gut; expression levels increase with age.

The protein resides in the cytoplasm. Its function is as follows. Regulatory component of a deubiquitinase complex consisting of bam and otu. The complex deubiquitinates K63-linked polyubiquitinated proteins, antagonizing the ubiquitination activity of Traf6 and regulating the IMD immune signaling pathway. Otu-bam deubiquitinase activity is regulated by Traf6 dependent immune signaling regulation of bam expression levels; this forms a feedback loop that regulates the IMD immune signaling pathway and balances gut immune activity during aging. The complex deubiquitinates and stabilizes CycA/cyclin-A to regulate CycA-dependent differentiation. Required to initiate both male and female gametogenesis. Part of a complex with bgcn involved in 3'-UTR-dependent translational repression of a subset of mRNAs, including those for mei-P26, nanos and shg/E-cadherin. Repression of mei-P26 is targeted by let-7 miRNA. Involved in a regulatory cascade with mei-P26 to control the progression of cystocytes through transit amplification and the switch to spermatocyte differentiation; mei-P26 facilitates bam accumulation, which in turn represses translation of mei-P26. Forms a complex with tut and bgcn involved in 3'-UTR-dependent post-transcriptional repression of several 3'-RNA processing factors, which promotes germline stem cell lineage differentiation and mitosis-to-meiosis transition. This Drosophila melanogaster (Fruit fly) protein is Protein bag of marbles.